The primary structure comprises 415 residues: Lipoyl synthase, apicoplast (415 aa).

The N-terminal stretch at 1–23 (MHFGIPSLFYLYILFSIIMRIKC) is a signal peptide. Cys153, Cys158, Cys164, Cys179, Cys183, Cys186, and Ser394 together coordinate [4Fe-4S] cluster. The Radical SAM core domain occupies 165–383 (WNIGTATIML…KEEGLKMGFK (219 aa)).

This sequence belongs to the radical SAM superfamily. Lipoyl synthase family. The cofactor is [4Fe-4S] cluster.

The protein localises to the plastid. It localises to the apicoplast. It catalyses the reaction [[Fe-S] cluster scaffold protein carrying a second [4Fe-4S](2+) cluster] + N(6)-octanoyl-L-lysyl-[protein] + 2 oxidized [2Fe-2S]-[ferredoxin] + 2 S-adenosyl-L-methionine + 4 H(+) = [[Fe-S] cluster scaffold protein] + N(6)-[(R)-dihydrolipoyl]-L-lysyl-[protein] + 4 Fe(3+) + 2 hydrogen sulfide + 2 5'-deoxyadenosine + 2 L-methionine + 2 reduced [2Fe-2S]-[ferredoxin]. The protein operates within protein modification; protein lipoylation via endogenous pathway; protein N(6)-(lipoyl)lysine from octanoyl-[acyl-carrier-protein]: step 2/2. Catalyzes the radical-mediated insertion of two sulfur atoms into the C-6 and C-8 positions of the octanoyl moiety bound to the lipoyl domains of lipoate-dependent enzymes, thereby converting the octanoylated domains into lipoylated derivatives. The sequence is that of Lipoyl synthase, apicoplast from Plasmodium falciparum (isolate 3D7).